The chain runs to 905 residues: Protein LONGIFOLIA 2 (905 aa).

Disordered stretches follow at residues Val-42–Met-136, Arg-232–Ser-268, Asp-285–Val-315, Ser-432–Asn-585, Cys-606–Asp-626, and Val-690–Pro-711. The span at Glu-65–Ser-74 shows a compositional bias: basic and acidic residues. Positions Phe-90–Ser-117 are enriched in low complexity. A compositionally biased stretch (basic and acidic residues) spans Thr-286–Asp-296. 3 stretches are compositionally biased toward polar residues: residues Ser-432–Gln-461, Leu-477–Thr-487, and Met-501–Thr-516. Residues Pro-566 to Arg-581 show a composition bias toward basic and acidic residues.

Interacts (via C-terminus) with TON1A and TON1B.

The protein localises to the cytoplasm. It is found in the cytoskeleton. Its function is as follows. In association with LNG1, regulates leaf morphology by promoting longitudinal polar cell elongation independently of ROT3. Associates with microtubules and recruits TON1A and TON1B to the cytoskeleton through its C-terminus. This is Protein LONGIFOLIA 2 (LNG2) from Arabidopsis thaliana (Mouse-ear cress).